A 351-amino-acid polypeptide reads, in one-letter code: Translation initiation factor eIF2B subunit beta (351 aa).

Belongs to the eIF-2B alpha/beta/delta subunits family. As to quaternary structure, component of the translation initiation factor 2B (eIF2B) complex which is a heterodecamer of two sets of five different subunits: alpha, beta, gamma, delta and epsilon. Subunits alpha, beta and delta comprise a regulatory subcomplex and subunits epsilon and gamma comprise a catalytic subcomplex. Within the complex, the hexameric regulatory complex resides at the center, with the two heterodimeric catalytic subcomplexes bound on opposite sides.

The protein resides in the cytoplasm. The protein localises to the cytosol. Activated by the chemical integrated stress response (ISR) inhibitor ISRIB which stimulates guanine nucleotide exchange factor activity for both phosphorylated and unphosphorylated eIF2. In terms of biological role, acts as a component of the translation initiation factor 2B (eIF2B) complex, which catalyzes the exchange of GDP for GTP on eukaryotic initiation factor 2 (eIF2) gamma subunit. Its guanine nucleotide exchange factor activity is repressed when bound to eIF2 complex phosphorylated on the alpha subunit, thereby limiting the amount of methionyl-initiator methionine tRNA available to the ribosome and consequently global translation is repressed. This Homo sapiens (Human) protein is Translation initiation factor eIF2B subunit beta (EIF2B2).